A 129-amino-acid polypeptide reads, in one-letter code: Protein PerB (129 aa).

Functionally, positive regulatory protein of bfpA, the gene coding for the bundle-forming pilus of EPEC. The chain is Protein PerB (perB) from Escherichia coli O111:H-.